Reading from the N-terminus, the 192-residue chain is Casparian strip membrane protein 4 (192 aa).

Residues 1 to 29 lie on the Cytoplasmic side of the membrane; that stretch reads MTKDVVIEHGESSKAPLVPAPVAAGVGRA. Residues 30–50 traverse the membrane as a helical segment; sequence VSIADVFLRFLSIVATIASAI. Topologically, residues 51 to 79 are extracellular; sequence SMGTTNETLPFFTQFIQFEAKYSDLPSFT. An N-linked (GlcNAc...) asparagine glycan is attached at asparagine 56. A helical membrane pass occupies residues 80 to 100; the sequence is FFVAANAVVCTYLVLSIPLSI. The Cytoplasmic segment spans residues 101–112; sequence VHIIRPRARYSR. Residues 113–133 traverse the membrane as a helical segment; it reads LILVFFDAVMLALLTAGASAA. Topologically, residues 134 to 166 are extracellular; sequence AAIVYLAHKGNVRANWFAICQQFDSFCERISGS. A helical membrane pass occupies residues 167-187; that stretch reads LIGSFAAMVLLIVLIFLSAFA. Residues 188 to 192 lie on the Cytoplasmic side of the membrane; the sequence is LARRH.

It belongs to the Casparian strip membrane proteins (CASP) family. Homodimer and heterodimers.

The protein localises to the cell membrane. Functionally, regulates membrane-cell wall junctions and localized cell wall deposition. Required for establishment of the Casparian strip membrane domain (CSD) and the subsequent formation of Casparian strips, a cell wall modification of the root endodermis that determines an apoplastic barrier between the intraorganismal apoplasm and the extraorganismal apoplasm and prevents lateral diffusion. This is Casparian strip membrane protein 4 from Sorghum bicolor (Sorghum).